The following is an 847-amino-acid chain: Pollen-specific leucine-rich repeat extensin-like protein 2 (847 aa).

The first 20 residues, 1-20 (MERPFGCFFILLLISYTVVA), serve as a signal peptide directing secretion. LRR repeat units follow at residues 45-71 (INKVDPNLKFENDRLKRAYIALQAWKK), 106-130 (LTVVAGVDLNHADIAGHLPPELGLM), 131-153 (TDLALFHINSNRFCGIIPKSLSK), 155-178 (ALMYEFDVSNNRFVGQFPEVSLSW), 179-202 (PSLKFLDLRYNEFEGSLPSEIFDK), 204-224 (LDAIFLNNNRFESVIPGTIGK), 226-248 (KASVVTFANNKFSGCIPKSIGNM), and 249-273 (KNLNEIVFTGNNLTGCFPNEIGLLN). Asn260 and Asn274 each carry an N-linked (GlcNAc...) asparagine glycan. LRR repeat units follow at residues 296–319 (LASVEQLDLSHNKLTGFVVDKFCK) and 321–343 (PNLDSFKFSYNFFNGEAESCVPG). Residues 381–847 (KDKCSGGSNG…SPPPPMFQGY (467 aa)) are disordered. Basic and acidic residues predominate over residues 438–484 (PKHESPKPEEPENKHELPKQKESPKPQPSKPEDSPKPEQPKPEESPK). Composition is skewed to pro residues over residues 485 to 499 (PEQPQIPEPTKPVSP) and 533 to 642 (VPPP…PPPT). The segment at 522–847 (SPPPPKVEDT…SPPPPMFQGY (326 aa)) is contains the Ser-Pro(4) repeats. Composition is skewed to polar residues over residues 667 to 682 (QVPTPSSESDQSQILS), 688 to 720 (TPVQSSTPSSEPTQVPTPSSSESYQAPNLSPVQ), and 726 to 752 (QAPTTSSETSQVPTPSSESNQSPSQAP). Composition is skewed to low complexity over residues 768–783 (PVQSPTPSSEPVSSPE) and 797–811 (NPSSVPSSSPSTDTS). Pro residues predominate over residues 838-847 (SPPPPMFQGY).

In terms of processing, hydroxylated on proline residues in the S-P-P-P-P repeat. O-glycosylated on hydroxyprolines. As to expression, expressed in flowers, stamen, pollen, and pollinated carpels (at protein level).

The protein localises to the secreted. The protein resides in the cell wall. Modulates cell morphogenesis by regulating cell wall formation and assembly, and/or growth polarization. The sequence is that of Pollen-specific leucine-rich repeat extensin-like protein 2 (PEX2) from Arabidopsis thaliana (Mouse-ear cress).